Here is a 341-residue protein sequence, read N- to C-terminus: Phenylalanine--tRNA ligase alpha subunit (341 aa).

Glutamate 254 serves as a coordination point for Mg(2+).

It belongs to the class-II aminoacyl-tRNA synthetase family. Phe-tRNA synthetase alpha subunit type 1 subfamily. In terms of assembly, tetramer of two alpha and two beta subunits. It depends on Mg(2+) as a cofactor.

The protein localises to the cytoplasm. It carries out the reaction tRNA(Phe) + L-phenylalanine + ATP = L-phenylalanyl-tRNA(Phe) + AMP + diphosphate + H(+). The polypeptide is Phenylalanine--tRNA ligase alpha subunit (Chlorobaculum tepidum (strain ATCC 49652 / DSM 12025 / NBRC 103806 / TLS) (Chlorobium tepidum)).